A 631-amino-acid chain; its full sequence is Hepatocyte nuclear factor 1-alpha (631 aa).

The dimerization stretch occupies residues 1 to 31 (MVSKLSQLQTELLAALLESGLSKEALIQALG). The HNF-p1 domain occupies 1-32 (MVSKLSQLQTELLAALLESGLSKEALIQALGE). The tract at residues 40 to 81 (GEGPLDKGESCGGGRGELAELPNGLGETRGSEDETDDDGEDF) is disordered. Serine 70 carries the phosphoserine modification. At threonine 74 the chain carries Phosphothreonine. The POU-specific atypical domain maps to 87–182 (KELENLSPEE…VAQQFTHAGQ (96 aa)). Serine 93 carries the post-translational modification Phosphoserine. Lysine 117 is covalently cross-linked (Glycyl lysine isopeptide (Lys-Gly) (interchain with G-Cter in ubiquitin)). 4 interaction with DNA regions span residues 130-132 (QRE), 143-149 (HLSQHLN), 155-158 (KTQK), and 203-206 (RFKW). A disordered region spans residues 183 to 205 (GGLIEEPTGDELPTKKGRRNRFK). The Nuclear localization signal signature appears at 197 to 205 (KKGRRNRFK). The segment at residues 199-279 (GRRNRFKWGP…NRRKEEAFRH (81 aa)) is a DNA-binding region (homeobox; HNF1-type). Serine 247 is modified (phosphoserine). Interaction with DNA regions lie at residues 263–265 (RVY) and 270–273 (NRRK). 2 disordered regions span residues 283 to 358 (MDTY…GLEP) and 545 to 567 (SDTEASSESGLHTPASQATTLHV). The span at 288-298 (GPPPGPGPGPA) shows a compositional bias: pro residues. A Phosphoserine modification is found at serine 313. Polar residues predominate over residues 325–353 (PATSETAEVPSSSGGPLVTVSTPLHQVSP).

This sequence belongs to the HNF1 homeobox family. As to quaternary structure, binds DNA as a dimer. Heterotetramer with PCBD1; formed by a dimer of dimers. Interacts with PCBD1. Interacts with BHLHE41. Interacts with NR5A2. Interacts with SPOP; this interaction promotes ubiquitination and degradation of HNF1A. Post-translationally, ubiquitinated in s SPOP-dependent manner; leading to prteasomal degradation. In terms of tissue distribution, liver.

It localises to the nucleus. Functionally, transcriptional activator that regulates the tissue specific expression of multiple genes, especially in pancreatic islet cells and in liver. Binds to the inverted palindrome 5'-GTTAATNATTAAC-3'. Activates the transcription of CYP1A2, CYP2E1 and CYP3A11. (Microbial infection) Plays a crucial role for hepatitis B virus gene transcription and DNA replication. Mechanistically, synergistically cooperates with NR5A2 to up-regulate the activity of one of the critical cis-elements in the hepatitis B virus genome enhancer II (ENII). In Homo sapiens (Human), this protein is Hepatocyte nuclear factor 1-alpha (HNF1A).